We begin with the raw amino-acid sequence, 761 residues long: Zinc finger protein 287 (761 aa).

The region spanning 49–131 (RQNFRNFPYP…TLVEDLTQIL (83 aa)) is the SCAN box domain. Positions 134–154 (EAPQNSTLSQDTPEEDPRGKH) are disordered. A KRAB domain is found at 170-238 (MTFKDVAVDI…IKEILEGPSP (69 aa)). C2H2-type zinc fingers lie at residues 368-390 (YKCNVCGKKFRKYPSLLKHQSTH), 396-418 (YECEECGKEFRHISSLIAHQRMH), 424-446 (YECHQCGKAFSQRAHLTIHQRIH), 452-474 (YKCDDCGKDFSQRAHLTIHQRTH), 480-502 (YKCLECGKTFSHSSSLINHQRVH), 508-530 (YICNECGKTFSQSTHLLQHQKIH), 536-558 (YKCNECWKVFSQSTYLIRHQRIH), 564-586 (YKCNECGKAFAHSSTLIQHQTTH), 592-614 (YICNICGKAFSQSANLTQHHRTH), 620-642 (YKCSVCGKAFSQSVHLTQHQRIH), 648-670 (FKCNICGKAYRQGANLTQHQRIH), 676-698 (YKCNECGKAFIYSSSLNQHQRTH), 704-726 (YKCNECDKDFSQRTCLIQHQRIH), and 732-754 (YACRICGKTFTQSTNLIQHQRVH).

This sequence belongs to the krueppel C2H2-type zinc-finger protein family.

The protein resides in the nucleus. Functionally, may be involved in transcriptional regulation. In Pongo pygmaeus (Bornean orangutan), this protein is Zinc finger protein 287.